A 244-amino-acid polypeptide reads, in one-letter code: Ubiquinone/menaquinone biosynthesis C-methyltransferase UbiE (244 aa).

S-adenosyl-L-methionine is bound by residues Thr70, Asp91, and 117 to 118 (DA).

The protein belongs to the class I-like SAM-binding methyltransferase superfamily. MenG/UbiE family.

It carries out the reaction a 2-demethylmenaquinol + S-adenosyl-L-methionine = a menaquinol + S-adenosyl-L-homocysteine + H(+). The enzyme catalyses a 2-methoxy-6-(all-trans-polyprenyl)benzene-1,4-diol + S-adenosyl-L-methionine = a 5-methoxy-2-methyl-3-(all-trans-polyprenyl)benzene-1,4-diol + S-adenosyl-L-homocysteine + H(+). It participates in quinol/quinone metabolism; menaquinone biosynthesis; menaquinol from 1,4-dihydroxy-2-naphthoate: step 2/2. It functions in the pathway cofactor biosynthesis; ubiquinone biosynthesis. In terms of biological role, methyltransferase required for the conversion of demethylmenaquinol (DMKH2) to menaquinol (MKH2) and the conversion of 2-polyprenyl-6-methoxy-1,4-benzoquinol (DDMQH2) to 2-polyprenyl-3-methyl-6-methoxy-1,4-benzoquinol (DMQH2). This is Ubiquinone/menaquinone biosynthesis C-methyltransferase UbiE from Laribacter hongkongensis (strain HLHK9).